The following is a 473-amino-acid chain: Sphingosine kinase 1 (473 aa).

One can recognise a DAGKc domain in the interval glutamine 83–asparagine 233. ATP contacts are provided by residues asparagine 93 to asparagine 95 and threonine 125 to asparagine 129. Residue serine 151–glycine 154 participates in substrate binding. The active-site Proton donor/acceptor is the aspartate 153. ATP is bound by residues glutamate 158 and glycine 184 to glycine 186. Aspartate 251 serves as a coordination point for substrate. ATP is bound by residues arginine 258, arginine 265, and aspartate 448–glutamate 450.

Requires Mg(2+) as cofactor. In terms of tissue distribution, expressed in the majority of cholinergic and GABAergic neurons, body wall muscle, excretory canal cells, intestine, and hypodermis.

Its subcellular location is the presynaptic cell membrane. The protein resides in the cell projection. It is found in the axon. It localises to the perikaryon. The protein localises to the mitochondrion membrane. The enzyme catalyses a sphingoid base + ATP = a sphingoid 1-phosphate + ADP + H(+). The catalysed reaction is 15-methylhexadecasphing-4-enine + ATP = 15-methylhexadecasphing-4-enine 1-phosphate + ADP + H(+). It catalyses the reaction 15-methylhexadecasphinganine + ATP = 15-methylhexadecasphinganine 1-phosphate + ADP + H(+). The protein operates within lipid metabolism; sphingolipid metabolism. In terms of biological role, catalyzes the phosphorylation of sphingoid bases to form sphingoid 1-phosphate (SPP), which have both intra- and extracellular functions. C.elegans contain specific sphingoid bases, which are unique or different in structure compared to the sphingoid bases found in other animals. Two examples of these distinctive compounds are: 15-methylhexadecasphinganine and 15-methylhexadecasphing-4-enine. Required for neurotransmitter release from neuromuscular junctions. Acts by recruiting the synaptic vesicle priming protein unc-13 to synapses. In Caenorhabditis elegans, this protein is Sphingosine kinase 1 (sphk-1).